We begin with the raw amino-acid sequence, 460 residues long: Phosphoenolpyruvate carboxylase (460 aa).

It belongs to the PEPCase type 2 family. Homotetramer. Requires Mg(2+) as cofactor.

The catalysed reaction is oxaloacetate + phosphate = phosphoenolpyruvate + hydrogencarbonate. Its function is as follows. Catalyzes the irreversible beta-carboxylation of phosphoenolpyruvate (PEP) to form oxaloacetate (OAA), a four-carbon dicarboxylic acid source for the tricarboxylic acid cycle. The chain is Phosphoenolpyruvate carboxylase from Pyrobaculum arsenaticum (strain DSM 13514 / JCM 11321 / PZ6).